The primary structure comprises 170 residues: ATP synthase subunit b (170 aa).

Residues 11–31 traverse the membrane as a helical segment; sequence AFTFGDAFFTLFAFAILLVLI.

Belongs to the ATPase B chain family. As to quaternary structure, F-type ATPases have 2 components, F(1) - the catalytic core - and F(0) - the membrane proton channel. F(1) has five subunits: alpha(3), beta(3), gamma(1), delta(1), epsilon(1). F(0) has three main subunits: a(1), b(2) and c(10-14). The alpha and beta chains form an alternating ring which encloses part of the gamma chain. F(1) is attached to F(0) by a central stalk formed by the gamma and epsilon chains, while a peripheral stalk is formed by the delta and b chains.

The protein resides in the cell membrane. Its function is as follows. F(1)F(0) ATP synthase produces ATP from ADP in the presence of a proton or sodium gradient. F-type ATPases consist of two structural domains, F(1) containing the extramembraneous catalytic core and F(0) containing the membrane proton channel, linked together by a central stalk and a peripheral stalk. During catalysis, ATP synthesis in the catalytic domain of F(1) is coupled via a rotary mechanism of the central stalk subunits to proton translocation. Component of the F(0) channel, it forms part of the peripheral stalk, linking F(1) to F(0). This chain is ATP synthase subunit b, found in Listeria monocytogenes serotype 4b (strain F2365).